The chain runs to 161 residues: Lipoprotein LpqH (161 aa).

The signal sequence occupies residues 1-21 (MNRQLRFAVAGPEILAAVVSG). A compositionally biased stretch (low complexity) spans 21-46 (GCSSGNKSAPSSSASSSSTSPSASSG). Residues 21–49 (GCSSGNKSAPSSSASSSSTSPSASSGGAA) form a disordered region. Cys22 carries the N-palmitoyl cysteine lipid modification. Cys22 carries S-diacylglycerol cysteine lipidation.

It belongs to the mycobacterial 19 kDa antigen family. In terms of processing, modified by Lgt on Cys-22 with an S-linked diacylglycerol with a mixture of C16, C18 and C19 fatty acids, signal peptide is removed by LspA, modifed by Lnt with an amide-linked mixture of C16 and C19 fatty acids.

The protein localises to the cell membrane. Might be involved in ligand transport. A host TLR2 agonist, modifies host gene expression in response to pathogen. The sequence is that of Lipoprotein LpqH (lpqH) from Mycobacterium avium.